A 273-amino-acid polypeptide reads, in one-letter code: 4-hydroxy-tetrahydrodipicolinate reductase (273 aa).

Residues 12–17 and E38 contribute to the NAD(+) site; that span reads GAGGRM. R39 contacts NADP(+). NAD(+) contacts are provided by residues 102-104 and 126-129; these read GTT and AANF. H159 serves as the catalytic Proton donor/acceptor. H160 serves as a coordination point for (S)-2,3,4,5-tetrahydrodipicolinate. The active-site Proton donor is the K163. Residue 169–170 participates in (S)-2,3,4,5-tetrahydrodipicolinate binding; it reads GT.

Belongs to the DapB family. In terms of assembly, homotetramer.

Its subcellular location is the cytoplasm. The enzyme catalyses (S)-2,3,4,5-tetrahydrodipicolinate + NAD(+) + H2O = (2S,4S)-4-hydroxy-2,3,4,5-tetrahydrodipicolinate + NADH + H(+). It catalyses the reaction (S)-2,3,4,5-tetrahydrodipicolinate + NADP(+) + H2O = (2S,4S)-4-hydroxy-2,3,4,5-tetrahydrodipicolinate + NADPH + H(+). Its pathway is amino-acid biosynthesis; L-lysine biosynthesis via DAP pathway; (S)-tetrahydrodipicolinate from L-aspartate: step 4/4. Catalyzes the conversion of 4-hydroxy-tetrahydrodipicolinate (HTPA) to tetrahydrodipicolinate. The sequence is that of 4-hydroxy-tetrahydrodipicolinate reductase from Enterobacter sp. (strain 638).